Here is a 670-residue protein sequence, read N- to C-terminus: Zinc finger and BTB domain-containing protein 5 (670 aa).

The region spanning 24–93 (CDCVIVVGNR…MYTSTLMLGE (70 aa)) is the BTB domain. 2 disordered regions span residues 158–256 (LSSS…QEDG) and 268–382 (EDAQ…SSTD). Positions 170–181 (PMSSSMRSSLDQ) are enriched in polar residues. A Phosphoserine modification is found at Ser234. Lys239 is covalently cross-linked (Glycyl lysine isopeptide (Lys-Gly) (interchain with G-Cter in SUMO2)). The segment covering 285–295 (SRATQVETSFE) has biased composition (polar residues). Residues Lys317 and Lys325 each participate in a glycyl lysine isopeptide (Lys-Gly) (interchain with G-Cter in SUMO2) cross-link. A compositionally biased stretch (low complexity) spans 345 to 360 (AEGSESVEVEGVVVSA). A compositionally biased stretch (basic and acidic residues) spans 361–374 (EKIDLSPESSDRSF). Ser366 carries the phosphoserine modification. Glycyl lysine isopeptide (Lys-Gly) (interchain with G-Cter in SUMO2) cross-links involve residues Lys399 and Lys410. The span at 414-432 (SNFSASQSTDDNLPNTTSD) shows a compositional bias: polar residues. Disordered regions lie at residues 414–433 (SNFS…TSDC) and 442–470 (LLSP…EPAD). Low complexity predominate over residues 444 to 459 (SPEAGPAGGPSSAPGS). Glycyl lysine isopeptide (Lys-Gly) (interchain with G-Cter in SUMO2) cross-links involve residues Lys535, Lys587, and Lys590. Residues 606-628 (YACKICCKTFLTLTDCKKHIRVH) form a C2H2-type 1 zinc finger. The C2H2-type 2; atypical zinc-finger motif lies at 634 to 657 (YACLKCGKRFSQSSHLYKHSKTTC). Residues Lys638 and Lys651 each participate in a glycyl lysine isopeptide (Lys-Gly) (interchain with G-Cter in SUMO2) cross-link.

The protein resides in the nucleus. May be involved in transcriptional regulation. This is Zinc finger and BTB domain-containing protein 5 (Zbtb5) from Mus musculus (Mouse).